A 463-amino-acid chain; its full sequence is Siroheme synthase (463 aa).

The interval 1–203 is precorrin-2 dehydrogenase /sirohydrochlorin ferrochelatase; it reads MDYLPLFHKL…GQGAEAERLL (203 aa). Residues 22–23 and 43–44 each bind NAD(+); these read EI and PD. The residue at position 128 (S128) is a Phosphoserine. The interval 216–463 is uroporphyrinogen-III C-methyltransferase; the sequence is GEVYLVGAGP…LAWFEGSQNS (248 aa). Residue P225 coordinates S-adenosyl-L-methionine. D248 functions as the Proton acceptor in the catalytic mechanism. The active-site Proton donor is K270. Residues 301–303, I306, 331–332, M383, and G412 each bind S-adenosyl-L-methionine; these read GGD and TA.

The protein in the N-terminal section; belongs to the precorrin-2 dehydrogenase / sirohydrochlorin ferrochelatase family. It in the C-terminal section; belongs to the precorrin methyltransferase family.

It catalyses the reaction uroporphyrinogen III + 2 S-adenosyl-L-methionine = precorrin-2 + 2 S-adenosyl-L-homocysteine + H(+). It carries out the reaction precorrin-2 + NAD(+) = sirohydrochlorin + NADH + 2 H(+). The catalysed reaction is siroheme + 2 H(+) = sirohydrochlorin + Fe(2+). Its pathway is cofactor biosynthesis; adenosylcobalamin biosynthesis; precorrin-2 from uroporphyrinogen III: step 1/1. It participates in cofactor biosynthesis; adenosylcobalamin biosynthesis; sirohydrochlorin from precorrin-2: step 1/1. It functions in the pathway porphyrin-containing compound metabolism; siroheme biosynthesis; precorrin-2 from uroporphyrinogen III: step 1/1. The protein operates within porphyrin-containing compound metabolism; siroheme biosynthesis; siroheme from sirohydrochlorin: step 1/1. Its pathway is porphyrin-containing compound metabolism; siroheme biosynthesis; sirohydrochlorin from precorrin-2: step 1/1. Functionally, multifunctional enzyme that catalyzes the SAM-dependent methylations of uroporphyrinogen III at position C-2 and C-7 to form precorrin-2 via precorrin-1. Then it catalyzes the NAD-dependent ring dehydrogenation of precorrin-2 to yield sirohydrochlorin. Finally, it catalyzes the ferrochelation of sirohydrochlorin to yield siroheme. The sequence is that of Siroheme synthase from Pseudomonas putida (strain ATCC 700007 / DSM 6899 / JCM 31910 / BCRC 17059 / LMG 24140 / F1).